The primary structure comprises 290 residues: Acetyl-coenzyme A carboxylase carboxyl transferase subunit beta (290 aa).

Residues 27–290 (LWVKCPSCES…LQKQPADAVA (264 aa)) enclose the CoA carboxyltransferase N-terminal domain. Zn(2+) is bound by residues cysteine 31, cysteine 34, cysteine 50, and cysteine 53. The segment at 31–53 (CPSCESTLYRTDVEANLHVCPKC) adopts a C4-type zinc-finger fold.

It belongs to the AccD/PCCB family. In terms of assembly, acetyl-CoA carboxylase is a heterohexamer composed of biotin carboxyl carrier protein (AccB), biotin carboxylase (AccC) and two subunits each of ACCase subunit alpha (AccA) and ACCase subunit beta (AccD). Zn(2+) is required as a cofactor.

Its subcellular location is the cytoplasm. It carries out the reaction N(6)-carboxybiotinyl-L-lysyl-[protein] + acetyl-CoA = N(6)-biotinyl-L-lysyl-[protein] + malonyl-CoA. It functions in the pathway lipid metabolism; malonyl-CoA biosynthesis; malonyl-CoA from acetyl-CoA: step 1/1. Functionally, component of the acetyl coenzyme A carboxylase (ACC) complex. Biotin carboxylase (BC) catalyzes the carboxylation of biotin on its carrier protein (BCCP) and then the CO(2) group is transferred by the transcarboxylase to acetyl-CoA to form malonyl-CoA. The polypeptide is Acetyl-coenzyme A carboxylase carboxyl transferase subunit beta (Cupriavidus taiwanensis (strain DSM 17343 / BCRC 17206 / CCUG 44338 / CIP 107171 / LMG 19424 / R1) (Ralstonia taiwanensis (strain LMG 19424))).